The following is a 130-amino-acid chain: Fluoride-specific ion channel FluC (130 aa).

The next 4 helical transmembrane spans lie at 3–23 (FVFLWAALGGAIGSSLRYFVG), 39–59 (GTFSVNIIGCFVIGFMGHLAV), 67–87 (FGIFFITGVLGGFTTFSSYGL), and 102–122 (ISYVLGTNILGFIGVAIGWFL). Na(+)-binding residues include Gly77 and Thr80.

The protein belongs to the fluoride channel Fluc/FEX (TC 1.A.43) family.

It localises to the cell inner membrane. It carries out the reaction fluoride(in) = fluoride(out). Its activity is regulated as follows. Na(+) is not transported, but it plays an essential structural role and its presence is essential for fluoride channel function. Functionally, fluoride-specific ion channel. Important for reducing fluoride concentration in the cell, thus reducing its toxicity. The sequence is that of Fluoride-specific ion channel FluC from Helicobacter pylori (strain P12).